Consider the following 173-residue polypeptide: Ribonuclease H (173 aa).

The interval 1 to 20 is disordered; it reads MKATSKAKTHPPGATAAKDP. One can recognise an RNase H type-1 domain in the interval 20–162; it reads PQKQVIIYTD…CDVLSKEAAG (143 aa). The Mg(2+) site is built by aspartate 29, glutamate 67, aspartate 89, and aspartate 154.

This sequence belongs to the RNase H family. In terms of assembly, monomer. It depends on Mg(2+) as a cofactor.

Its subcellular location is the cytoplasm. It catalyses the reaction Endonucleolytic cleavage to 5'-phosphomonoester.. Its function is as follows. Endonuclease that specifically degrades the RNA of RNA-DNA hybrids. The protein is Ribonuclease H of Syntrophus aciditrophicus (strain SB).